Here is a 595-residue protein sequence, read N- to C-terminus: Protein LUTEIN DEFICIENT 5, chloroplastic (595 aa).

The transit peptide at 1–28 (MAMAFPLSYTPTITVKPVTYSRRSNFVV) directs the protein to the chloroplast. Cysteine 516 is a binding site for heme.

The protein belongs to the cytochrome P450 family. Heme is required as a cofactor.

The protein resides in the plastid. Its subcellular location is the chloroplast. Its function is as follows. Heme-containing cytochrome P450 involved in the biosynthesis of xanthophylls. Specific for beta-ring hydroxylation of alpha- and beta-carotene. Also has a low activity toward the epsilon-rings of alpha-carotene. The beta-ring of alpha-carotene is the preferred substrate in planta. The chain is Protein LUTEIN DEFICIENT 5, chloroplastic (CYP97A3) from Arabidopsis thaliana (Mouse-ear cress).